A 454-amino-acid chain; its full sequence is UDP-N-acetylmuramoylalanine--D-glutamate ligase (454 aa).

An ATP-binding site is contributed by 119–125; sequence GSNGKTT.

The protein belongs to the MurCDEF family.

The protein localises to the cytoplasm. The catalysed reaction is UDP-N-acetyl-alpha-D-muramoyl-L-alanine + D-glutamate + ATP = UDP-N-acetyl-alpha-D-muramoyl-L-alanyl-D-glutamate + ADP + phosphate + H(+). The protein operates within cell wall biogenesis; peptidoglycan biosynthesis. In terms of biological role, cell wall formation. Catalyzes the addition of glutamate to the nucleotide precursor UDP-N-acetylmuramoyl-L-alanine (UMA). This is UDP-N-acetylmuramoylalanine--D-glutamate ligase from Latilactobacillus sakei subsp. sakei (strain 23K) (Lactobacillus sakei subsp. sakei).